The sequence spans 195 residues: Imidazoleglycerol-phosphate dehydratase (195 aa).

It belongs to the imidazoleglycerol-phosphate dehydratase family.

Its subcellular location is the cytoplasm. The enzyme catalyses D-erythro-1-(imidazol-4-yl)glycerol 3-phosphate = 3-(imidazol-4-yl)-2-oxopropyl phosphate + H2O. It participates in amino-acid biosynthesis; L-histidine biosynthesis; L-histidine from 5-phospho-alpha-D-ribose 1-diphosphate: step 6/9. This Ruegeria pomeroyi (strain ATCC 700808 / DSM 15171 / DSS-3) (Silicibacter pomeroyi) protein is Imidazoleglycerol-phosphate dehydratase.